Reading from the N-terminus, the 272-residue chain is Golgi to ER traffic protein 5 (272 aa).

Disordered stretches follow at residues 1-35 and 85-105; these read MSTV…HSGT and LHAP…PGSS. Positions 108–198 constitute a Ubiquitin-like domain; sequence ITVHLKSARN…VEFGVMIIGG (91 aa). A disordered region spans residues 212–231; that stretch reads SAEQKESYEPPKPAVGPSGE.

The protein belongs to the GET5 family. As to quaternary structure, forms homodimers via its C-terminal domain. Component of the get4/get5/sgt2 sorting complex. Binds directly sgt12 homodimers.

Its subcellular location is the cytoplasm. In terms of biological role, component of the get4/get5/sgt2 sorting complex involved in the GET (guided entry of TA proteins) pathway that leads to the insertion of tail-anchored (TA) proteins into the endoplasmic reticulum. Get4 and get5 form an obligate complex that catalyzes the transfer of tail-anchored proteins destined to the endoplasmic reticulum from sgt2 to the cytosolic targeting factor which then targets the TA protein to the ER membrane via get1/get2. This is Golgi to ER traffic protein 5 from Aspergillus fumigatus (strain ATCC MYA-4609 / CBS 101355 / FGSC A1100 / Af293) (Neosartorya fumigata).